Reading from the N-terminus, the 303-residue chain is Coenzyme PQQ synthesis protein B (303 aa).

The protein belongs to the PqqB family.

Its pathway is cofactor biosynthesis; pyrroloquinoline quinone biosynthesis. In terms of biological role, may be involved in the transport of PQQ or its precursor to the periplasm. The chain is Coenzyme PQQ synthesis protein B from Pseudomonas putida (strain ATCC 47054 / DSM 6125 / CFBP 8728 / NCIMB 11950 / KT2440).